The primary structure comprises 360 residues: MRTDLFDFELPAGSIALRPASPRDSARMLVVQPGSGVRDQQVSDLPEWLRPGDQLVVNDTRVIAAQLHGRRIGREAEPRIDATLIKRLDGSRWSALVRPARKLMAGDIVRLGNEGRVCFLGHLDARVESKGEEGEVTFAFSFHGPMLDQAIAELGSTPLPPYIASKRAPDDRDASDYQTMFATHEGAVAAPTAGLHFTPEIETALRGRGVGLHRITLHVGAGTFLPVKVDDTAGHRMHSEWGAISTETADALNAARSRGGRIVAVGTTSLRLLESAADDDGRIKPFTGETAIFITPGHRFRAVDILMTNFHLPRSTLFMLVSAFSGLETMKQAYAHAISAGYRFYSYGDACLLFPERAGA.

It belongs to the QueA family. In terms of assembly, monomer.

It is found in the cytoplasm. The enzyme catalyses 7-aminomethyl-7-carbaguanosine(34) in tRNA + S-adenosyl-L-methionine = epoxyqueuosine(34) in tRNA + adenine + L-methionine + 2 H(+). Its pathway is tRNA modification; tRNA-queuosine biosynthesis. In terms of biological role, transfers and isomerizes the ribose moiety from AdoMet to the 7-aminomethyl group of 7-deazaguanine (preQ1-tRNA) to give epoxyqueuosine (oQ-tRNA). In Nitrobacter winogradskyi (strain ATCC 25391 / DSM 10237 / CIP 104748 / NCIMB 11846 / Nb-255), this protein is S-adenosylmethionine:tRNA ribosyltransferase-isomerase.